Reading from the N-terminus, the 224-residue chain is Deoxyribose-phosphate aldolase (224 aa).

D92 (proton donor/acceptor) is an active-site residue. Residue K155 is the Schiff-base intermediate with acetaldehyde of the active site. The Proton donor/acceptor role is filled by K184.

The protein belongs to the DeoC/FbaB aldolase family. DeoC type 1 subfamily.

It localises to the cytoplasm. The catalysed reaction is 2-deoxy-D-ribose 5-phosphate = D-glyceraldehyde 3-phosphate + acetaldehyde. It participates in carbohydrate degradation; 2-deoxy-D-ribose 1-phosphate degradation; D-glyceraldehyde 3-phosphate and acetaldehyde from 2-deoxy-alpha-D-ribose 1-phosphate: step 2/2. In terms of biological role, catalyzes a reversible aldol reaction between acetaldehyde and D-glyceraldehyde 3-phosphate to generate 2-deoxy-D-ribose 5-phosphate. This chain is Deoxyribose-phosphate aldolase, found in Halalkalibacterium halodurans (strain ATCC BAA-125 / DSM 18197 / FERM 7344 / JCM 9153 / C-125) (Bacillus halodurans).